Here is a 297-residue protein sequence, read N- to C-terminus: Lysenin (297 aa).

Residues Glu10–Ser33 form an N-terminal cap domain region. A beta-hairpin domain region spans residues Val34–Ile107. The segment at Pro108–Ile156 is N-terminal cap domain. The segment at Val157–Gly297 is C-terminal receptor-binding domain. The an N-(acyl)-sphingosylphosphocholine site is built by Lys185, Ser227, Tyr233, and Tyr282. An intrachain disulfide couples Cys272 to Cys283.

The protein belongs to the lysenin family. Binds to sphingomyelin as a monomer by using its C-terminal domain. Forms a nonamer when sphingomyelin/lysenin ratio is lower than ca 500. Oligomerization, but not binding, is influenced by the fluidity of sphingomyelin. Expressed by coelomocytes.

It localises to the secreted. Its subcellular location is the target cell membrane. Its function is as follows. Pore-forming toxin that defensively acts against parasitic microorganisms by forming pores in sphingomyelin-containing membranes. Has hemolytic activity and is also cytotoxic to spermatozoa of some species of invertebrates and many species of vertebrates and to amphibian larvae, guinea pig polymorphonuclear leukocytes, chicken fibroblasts, normal spleen cells and various tumor cells. Is lethal for various species of reptiles, amphibian, birds and mammals. Induces smooth muscle contraction. It binds sphingomyelin and induces hemolysis in the same manner as lysenin-related protein 2, and is 10-fold more effective than lysenin-related protein 1. This Eisenia fetida (Red wiggler worm) protein is Lysenin.